A 704-amino-acid chain; its full sequence is Elongation factor G (704 aa).

Residues 8–290 (EKYRNIGICA…GVVRYLPAPN (283 aa)) form the tr-type G domain. GTP contacts are provided by residues 17–24 (AHVDAGKT), 88–92 (DTPGH), and 142–145 (NKMD).

This sequence belongs to the TRAFAC class translation factor GTPase superfamily. Classic translation factor GTPase family. EF-G/EF-2 subfamily.

Its subcellular location is the cytoplasm. Functionally, catalyzes the GTP-dependent ribosomal translocation step during translation elongation. During this step, the ribosome changes from the pre-translocational (PRE) to the post-translocational (POST) state as the newly formed A-site-bound peptidyl-tRNA and P-site-bound deacylated tRNA move to the P and E sites, respectively. Catalyzes the coordinated movement of the two tRNA molecules, the mRNA and conformational changes in the ribosome. The protein is Elongation factor G of Francisella tularensis subsp. holarctica (strain FTNF002-00 / FTA).